The following is a 170-amino-acid chain: Sec-independent protein translocase protein TatB (170 aa).

A helical transmembrane segment spans residues 1 to 21; that stretch reads MIDLGISKLALIGAVALIVIG.

The protein belongs to the TatB family. The Tat system comprises two distinct complexes: a TatABC complex, containing multiple copies of TatA, TatB and TatC subunits, and a separate TatA complex, containing only TatA subunits. Substrates initially bind to the TatABC complex, which probably triggers association of the separate TatA complex to form the active translocon.

The protein resides in the cell inner membrane. Part of the twin-arginine translocation (Tat) system that transports large folded proteins containing a characteristic twin-arginine motif in their signal peptide across membranes. Together with TatC, TatB is part of a receptor directly interacting with Tat signal peptides. TatB may form an oligomeric binding site that transiently accommodates folded Tat precursor proteins before their translocation. The chain is Sec-independent protein translocase protein TatB from Cupriavidus necator (strain ATCC 17699 / DSM 428 / KCTC 22496 / NCIMB 10442 / H16 / Stanier 337) (Ralstonia eutropha).